The chain runs to 352 residues: Molybdenum import ATP-binding protein ModC (352 aa).

The 229-residue stretch at Met1 to Glu229 folds into the ABC transporter domain. Gly31–Thr38 serves as a coordination point for ATP. The Mop domain maps to Gln289–Ala352.

This sequence belongs to the ABC transporter superfamily. Molybdate importer (TC 3.A.1.8) family. In terms of assembly, the complex is composed of two ATP-binding proteins (ModC), two transmembrane proteins (ModB) and a solute-binding protein (ModA).

Its subcellular location is the cell inner membrane. The enzyme catalyses molybdate(out) + ATP + H2O = molybdate(in) + ADP + phosphate + H(+). Functionally, part of the ABC transporter complex ModABC involved in molybdenum import. Responsible for energy coupling to the transport system. The sequence is that of Molybdenum import ATP-binding protein ModC from Escherichia coli (strain K12).